Here is a 160-residue protein sequence, read N- to C-terminus: Large ribosomal subunit protein uL13 (160 aa).

Belongs to the universal ribosomal protein uL13 family. Part of the 50S ribosomal subunit.

Its function is as follows. This protein is one of the early assembly proteins of the 50S ribosomal subunit, although it is not seen to bind rRNA by itself. It is important during the early stages of 50S assembly. The chain is Large ribosomal subunit protein uL13 from Orientia tsutsugamushi (strain Boryong) (Rickettsia tsutsugamushi).